The following is a 284-amino-acid chain: Bifunctional protein FolD (284 aa).

NADP(+)-binding positions include 166-168 and isoleucine 232; that span reads GAS.

Belongs to the tetrahydrofolate dehydrogenase/cyclohydrolase family. Homodimer.

It catalyses the reaction (6R)-5,10-methylene-5,6,7,8-tetrahydrofolate + NADP(+) = (6R)-5,10-methenyltetrahydrofolate + NADPH. The enzyme catalyses (6R)-5,10-methenyltetrahydrofolate + H2O = (6R)-10-formyltetrahydrofolate + H(+). It functions in the pathway one-carbon metabolism; tetrahydrofolate interconversion. Its function is as follows. Catalyzes the oxidation of 5,10-methylenetetrahydrofolate to 5,10-methenyltetrahydrofolate and then the hydrolysis of 5,10-methenyltetrahydrofolate to 10-formyltetrahydrofolate. This Shewanella amazonensis (strain ATCC BAA-1098 / SB2B) protein is Bifunctional protein FolD.